A 176-amino-acid polypeptide reads, in one-letter code: RNA polymerase sigma factor SigZ (176 aa).

A Polymerase core binding motif is present at residues 30–43; that stretch reads DLLQIVFMKIQVHL. The segment at residues 125-144 is a DNA-binding region (H-T-H motif); sequence QKELSEKLGISYSGAKSRVQ.

Belongs to the sigma-70 factor family. ECF subfamily.

Its function is as follows. Sigma factors are initiation factors that promote the attachment of RNA polymerase to specific initiation sites and are then released. The chain is RNA polymerase sigma factor SigZ (sigZ) from Bacillus subtilis (strain 168).